A 257-amino-acid chain; its full sequence is Protein vip1 (257 aa).

An RRM domain is found at 3–76; it reads NQVIVTNISP…NKIQITSEDG (74 aa). The disordered stretch occupies residues 74–99; the sequence is EDGGAASTTDQGGAGGDQAARQEDKP. The span at 75-84 shows a compositional bias: low complexity; the sequence is DGGAASTTDQ. Residues serine 132 and serine 177 each carry the phosphoserine modification. The interval 217-257 is disordered; it reads ARRLADAKNQAEGTASPASSTPTAPAEKEPTAPTTESKTTE. A Phosphothreonine modification is found at threonine 230. Residues 230-257 are compositionally biased toward low complexity; sequence TASPASSTPTAPAEKEPTAPTTESKTTE. Phosphoserine occurs at positions 232 and 235.

The sequence is that of Protein vip1 (vip1) from Schizosaccharomyces pombe (strain 972 / ATCC 24843) (Fission yeast).